The primary structure comprises 126 residues: MADLAKIVEDLSSLTVLEAAELAKLLEEKWGVSAAAAVAVAAGPAAGGAAAAPVEEQTEFTVVLAAVGDKKIEVIKEVRGVTGLGLKEAKDLVEAAPKPVKEGVSKEEAEKIKAALEKAGAKVELK.

This sequence belongs to the bacterial ribosomal protein bL12 family. As to quaternary structure, homodimer. Part of the ribosomal stalk of the 50S ribosomal subunit. Forms a multimeric L10(L12)X complex, where L10 forms an elongated spine to which 2 to 4 L12 dimers bind in a sequential fashion. Binds GTP-bound translation factors.

Its function is as follows. Forms part of the ribosomal stalk which helps the ribosome interact with GTP-bound translation factors. Is thus essential for accurate translation. The protein is Large ribosomal subunit protein bL12 of Beijerinckia indica subsp. indica (strain ATCC 9039 / DSM 1715 / NCIMB 8712).